The following is a 266-amino-acid chain: Isoprenyl transferase (266 aa).

D36 is an active-site residue. Position 36 (D36) interacts with Mg(2+). Residues G37–R40, W41, R49, H53, and S81–E83 contribute to the substrate site. Catalysis depends on N84, which acts as the Proton acceptor. Substrate-binding positions include W85, R87, R204, and R210–S212. Position 223 (E223) interacts with Mg(2+).

The protein belongs to the UPP synthase family. As to quaternary structure, homodimer. It depends on Mg(2+) as a cofactor.

Catalyzes the condensation of isopentenyl diphosphate (IPP) with allylic pyrophosphates generating different type of terpenoids. The sequence is that of Isoprenyl transferase from Prochlorococcus marinus (strain SARG / CCMP1375 / SS120).